The sequence spans 182 residues: Transmembrane and coiled-coil domain-containing protein 2 (182 aa).

2 helical membrane passes run 10 to 30 (IIIDYLSLSSIWNYLQATLLG) and 50 to 70 (VQVILGISFLILLGVGMYALW). Residues 122–149 (GLQEKILKKLQTVENKVKDLEGMIISQK) adopt a coiled-coil conformation.

It is found in the membrane. The chain is Transmembrane and coiled-coil domain-containing protein 2 (TMCO2) from Bos taurus (Bovine).